Reading from the N-terminus, the 787-residue chain is LPS-assembly protein LptD (787 aa).

A signal peptide spans 1 to 39 (MPRKTLLPLVPACDAAPRRKRLAAALLAVPGLVPAVSQA).

The protein belongs to the LptD family. In terms of assembly, component of the lipopolysaccharide transport and assembly complex. Interacts with LptE and LptA.

Its subcellular location is the cell outer membrane. Functionally, together with LptE, is involved in the assembly of lipopolysaccharide (LPS) at the surface of the outer membrane. The polypeptide is LPS-assembly protein LptD (Burkholderia thailandensis (strain ATCC 700388 / DSM 13276 / CCUG 48851 / CIP 106301 / E264)).